The sequence spans 330 residues: Major ferric iron-binding protein (330 aa).

The first 22 residues, 1–22 (MKTSIRYALLAAALTAATPALA), serve as a signal peptide directing secretion. The Fe cation site is built by H31, E79, Y217, and Y218.

This sequence belongs to the bacterial solute-binding protein 1 family.

It is found in the periplasm. This protein may be a central component in the iron-acquisition system. In Neisseria gonorrhoeae, this protein is Major ferric iron-binding protein (fbp).